The primary structure comprises 1459 residues: ARF guanine-nucleotide exchange factor 2 (1459 aa).

2 positions are modified to phosphoserine: serine 46 and serine 284. The SEC7 domain occupies 570 to 714 (FNEKPKKGIP…IIMLNTDLHN (145 aa)). Residues 1412–1459 (EKGNGSSSHGSAHEQTPESNDVEIEATAPIDDNTDDDNKPKLSDVEKD) form a disordered region. Positions 1447-1459 (DDNKPKLSDVEKD) are enriched in basic and acidic residues.

In terms of assembly, interacts (via SEC7 domain) with DRS2 (via C-terminus); the interaction is direct. Interacts with GMH1.

Its subcellular location is the cytoplasm. It localises to the cytosol. It is found in the membrane. The protein localises to the golgi apparatus membrane. Its function is as follows. Activates the ARF proteins by exchanging bound GDP for free GTP. Plays a role in maintaining mitochondrial morphology. Stimulates DRS2 flippase activity. The sequence is that of ARF guanine-nucleotide exchange factor 2 (GEA2) from Saccharomyces cerevisiae (strain ATCC 204508 / S288c) (Baker's yeast).